The primary structure comprises 431 residues: Foot protein 1 variant 2 (431 aa).

Residues 1–20 (MARNMNILTLFAVLLGSASA) form the signal peptide. 3',4'-dihydroxyphenylalanine is present on Tyr-22. Residue Pro-33 is modified to 4-hydroxyproline. An A-1; approximate repeat occupies 41–50 (VPPPAWTAWK). The 13 X 10 AA A-P-P-P-A-W-T-A-W-K stretch occupies residues 41 to 270 (VPPPAWTAWK…APPPAWTAWK (230 aa)). Residues Trp-46, Trp-49, Trp-56, and Trp-59 each carry the 7'-hydroxytryptophan modification. C-linked (Man) hydroxytryptophan glycans are attached at residues Trp-46, Trp-49, Trp-56, and Trp-59. The A-2; approximate repeat unit spans residues 51-60 (AHPPAWTAWK). One copy of the B-1 repeat lies at 61-70 (ATPKPWTAWK). The segment at 61–310 (ATPKPWTAWK…ATPKPWTAWR (250 aa)) is 27 X 10 AA A-T-P-K-P-W-T-A-W-K. The residue at position 65 (Pro-65) is a 4-hydroxyproline. The C-linked (Man) tryptophan glycan is linked to Trp-66. Trp-69 is modified (7'-hydroxytryptophan). C-linked (Man) hydroxytryptophan glycosylation occurs at Trp-69. One copy of the A-3 repeat lies at 71 to 80 (APPPAWTAWK). Pro-72, Pro-73, and Pro-74 each carry 4-hydroxyproline. Residues Trp-76 and Trp-79 each carry the 7'-hydroxytryptophan modification. C-linked (Man) hydroxytryptophan glycans are attached at residues Trp-76 and Trp-79. The stretch at 81–90 (ATPKPWTAWK) is one B-2 repeat. 4-hydroxyproline is present on Pro-85. Trp-86 carries a C-linked (Man) tryptophan glycan. Trp-89 bears the 7'-hydroxytryptophan mark. A glycan (C-linked (Man) hydroxytryptophan) is linked at Trp-89. The stretch at 91 to 100 (APPPTWTAWK) is one A-4; approximate repeat. 3 positions are modified to 4-hydroxyproline: Pro-92, Pro-93, and Pro-94. Trp-96 and Trp-99 each carry 7'-hydroxytryptophan. C-linked (Man) hydroxytryptophan glycans are attached at residues Trp-96 and Trp-99. The B-3 repeat unit spans residues 101–110 (ATPKPWTAWK). At Pro-105 the chain carries 4-hydroxyproline. C-linked (Man) tryptophan glycosylation occurs at Trp-106. At Trp-109 the chain carries 7'-hydroxytryptophan. A glycan (C-linked (Man) hydroxytryptophan) is linked at Trp-109. The stretch at 111–120 (APPPVWTAWK) is one A-5; approximate repeat. Residues Pro-112, Pro-113, and Pro-114 each carry the 4-hydroxyproline modification. Residues Trp-116 and Trp-119 each carry the 7'-hydroxytryptophan modification. C-linked (Man) hydroxytryptophan glycans are attached at residues Trp-116 and Trp-119. One copy of the B-4; approximate repeat lies at 121–130 (ATPKPRTAWK). The residue at position 125 (Pro-125) is a 4-hydroxyproline. 7'-hydroxytryptophan is present on Trp-129. Trp-129 carries a C-linked (Man) hydroxytryptophan glycan. An A-6; approximate repeat occupies 131 to 140 (APPPTWTAWK). A 4-hydroxyproline mark is found at Pro-132, Pro-133, and Pro-134. A 7'-hydroxytryptophan mark is found at Trp-136 and Trp-139. C-linked (Man) hydroxytryptophan glycans are attached at residues Trp-136 and Trp-139. The B-5; approximate repeat unit spans residues 141-150 (AAPKPWTAWK). Position 145 is a 4-hydroxyproline (Pro-145). Trp-146 carries a C-linked (Man) tryptophan glycan. At Trp-149 the chain carries 7'-hydroxytryptophan. A glycan (C-linked (Man) hydroxytryptophan) is linked at Trp-149. One copy of the B-6 repeat lies at 151–160 (ATPKPWTAWK). 4-hydroxyproline is present on Pro-155. C-linked (Man) tryptophan glycosylation is present at Trp-156. Trp-159 carries the post-translational modification 7'-hydroxytryptophan. Trp-159 is a glycosylation site (C-linked (Man) hydroxytryptophan). Residues 161–170 (APPPAWTAWK) form an A-7 repeat. A 4-hydroxyproline mark is found at Pro-162, Pro-163, and Pro-164. Residues Trp-166 and Trp-169 each carry the 7'-hydroxytryptophan modification. C-linked (Man) hydroxytryptophan glycans are attached at residues Trp-166 and Trp-169. Residues 171 to 180 (ATPKPWTAWK) form a B-7 repeat. A 4-hydroxyproline modification is found at Pro-175. C-linked (Man) tryptophan glycosylation is present at Trp-176. Trp-179 bears the 7'-hydroxytryptophan mark. The C-linked (Man) hydroxytryptophan glycan is linked to Trp-179. One copy of the B-8 repeat lies at 181 to 190 (ATPKPWTAWK). At Pro-185 the chain carries 4-hydroxyproline. Trp-186 carries C-linked (Man) tryptophan glycosylation. Trp-189 is modified (7'-hydroxytryptophan). C-linked (Man) hydroxytryptophan glycosylation is present at Trp-189. The B-9 repeat unit spans residues 191-200 (ATPKPWTAWK). The residue at position 195 (Pro-195) is a 4-hydroxyproline. C-linked (Man) tryptophan glycosylation occurs at Trp-196. Trp-199 is subject to 7'-hydroxytryptophan. A glycan (C-linked (Man) hydroxytryptophan) is linked at Trp-199. The stretch at 201-210 (ATPKPWTVWK) is one B-10; approximate repeat. 4-hydroxyproline is present on Pro-205. Trp-206 is a glycosylation site (C-linked (Man) tryptophan). Trp-209 is modified (7'-hydroxytryptophan). C-linked (Man) hydroxytryptophan glycosylation occurs at Trp-209. The B-11 repeat unit spans residues 211-220 (ATPKPWTAWK). Pro-215 bears the 4-hydroxyproline mark. The C-linked (Man) tryptophan glycan is linked to Trp-216. 7'-hydroxytryptophan is present on Trp-219. Trp-219 is a glycosylation site (C-linked (Man) hydroxytryptophan). One copy of the A-8 repeat lies at 221-230 (APPPAWTAWK). Residues Pro-222, Pro-223, and Pro-224 each carry the 4-hydroxyproline modification. Residues Trp-226 and Trp-229 each carry the 7'-hydroxytryptophan modification. C-linked (Man) hydroxytryptophan glycosylation is found at Trp-226 and Trp-229. Residues 231–240 (ATPKPWTAWK) form a B-12 repeat. 4-hydroxyproline is present on Pro-235. A C-linked (Man) tryptophan glycan is attached at Trp-236. The residue at position 239 (Trp-239) is a 7'-hydroxytryptophan. Residue Trp-239 is glycosylated (C-linked (Man) hydroxytryptophan). An A-9 repeat occupies 241–250 (APPPAWTAWK). 4-hydroxyproline is present on residues Pro-242, Pro-243, and Pro-244. 7'-hydroxytryptophan occurs at positions 246 and 249. Trp-246 and Trp-249 each carry a C-linked (Man) hydroxytryptophan glycan. The B-13 repeat unit spans residues 251-260 (ATPKPWTAWK). At Pro-255 the chain carries 4-hydroxyproline. Trp-256 carries C-linked (Man) tryptophan glycosylation. Trp-259 carries the post-translational modification 7'-hydroxytryptophan. C-linked (Man) hydroxytryptophan glycosylation is present at Trp-259. Residues 261-270 (APPPAWTAWK) form an A-10 repeat. Pro-262, Pro-263, and Pro-264 each carry 4-hydroxyproline. 7'-hydroxytryptophan occurs at positions 266 and 269. Residues Trp-266 and Trp-269 are each glycosylated (C-linked (Man) hydroxytryptophan). A B-14 repeat occupies 271–280 (ATPKPWTAWK). Pro-275 is modified (4-hydroxyproline). A glycan (C-linked (Man) tryptophan) is linked at Trp-276. Trp-279 carries the post-translational modification 7'-hydroxytryptophan. The C-linked (Man) hydroxytryptophan glycan is linked to Trp-279. Residues 281–290 (ATPKPWTAWK) form a B-15 repeat. Pro-285 bears the 4-hydroxyproline mark. A glycan (C-linked (Man) tryptophan) is linked at Trp-286. At Trp-289 the chain carries 7'-hydroxytryptophan. Trp-289 carries C-linked (Man) hydroxytryptophan glycosylation. The stretch at 291-300 (ATPKPWTAWK) is one B-16 repeat. Pro-295 carries the 4-hydroxyproline modification. A glycan (C-linked (Man) tryptophan) is linked at Trp-296. At Trp-299 the chain carries 7'-hydroxytryptophan. C-linked (Man) hydroxytryptophan glycosylation occurs at Trp-299. The stretch at 301–310 (ATPKPWTAWR) is one B-17; approximate repeat. At Pro-305 the chain carries 4-hydroxyproline. Trp-306 is a glycosylation site (C-linked (Man) tryptophan). Trp-309 carries the 7'-hydroxytryptophan modification. Trp-309 carries a C-linked (Man) hydroxytryptophan glycan. The tract at residues 322–377 (GHGYGGYGKPGKPGKPGSKGPRGPAGPPGATGKTGRTGATGKRGPPGYPGKPGVPG) is disordered. Over residues 323–332 (HGYGGYGKPG) the composition is skewed to gly residues. The 52-residue stretch at 329–380 (GKPGKPGKPGSKGPRGPAGPPGATGKTGRTGATGKRGPPGYPGKPGVPGRNG) folds into the Collagen-like domain. Positions 336–366 (KPGSKGPRGPAGPPGATGKTGRTGATGKRGP) are enriched in low complexity. 4-hydroxyproline is present on residues Pro-367, Pro-370, and Pro-376.

Produced by the byssal gland.

The protein resides in the secreted. In terms of biological role, provides adhesiveness to the mussel's foot. Mussels produce one of the strongest water insoluble glues. The mussel's adhesive is a bundle of threads, called a byssus, formed by a fibrous collagenous core coated with adhesive proteins. In Perna viridis (Asian green mussel), this protein is Foot protein 1 variant 2.